Here is a 496-residue protein sequence, read N- to C-terminus: Probable serine/threonine-protein kinase DDB_G0284251 (496 aa).

Over residues 1 to 13 (MIEINNNHNNGNG) the composition is skewed to low complexity. The disordered stretch occupies residues 1 to 25 (MIEINNNHNNGNGKQFPSSQIMPDS). Residues 36-288 (YTLGEKIGRG…AQELLQHPIF (253 aa)) form the Protein kinase domain. ATP-binding positions include 42 to 50 (IGRGAFGQV) and Lys65. Residue Asp158 is the Proton acceptor of the active site. The interval 323-345 (DWGSSSSTSGSSTPLSSSSSSSN) is disordered. Residues 353–386 (EDFNKLQTTIKQQAQTISNLSEEILILKKELKEK) are a coiled coil. The tract at residues 454–496 (PQLTPSSSRENISLSNSSSSIPNPNQNQNQNNKSKSKKFGFFS) is disordered. The span at 458-486 (PSSSRENISLSNSSSSIPNPNQNQNQNNK) shows a compositional bias: low complexity. Over residues 487–496 (SKSKKFGFFS) the composition is skewed to basic residues.

Belongs to the protein kinase superfamily. STE Ser/Thr protein kinase family. It depends on Mg(2+) as a cofactor.

It catalyses the reaction L-seryl-[protein] + ATP = O-phospho-L-seryl-[protein] + ADP + H(+). The enzyme catalyses L-threonyl-[protein] + ATP = O-phospho-L-threonyl-[protein] + ADP + H(+). The chain is Probable serine/threonine-protein kinase DDB_G0284251 from Dictyostelium discoideum (Social amoeba).